The chain runs to 423 residues: Glucose-1-phosphate adenylyltransferase 1 (423 aa).

Alpha-D-glucose 1-phosphate is bound by residues Tyr111, Gly176, 191–192, and Ser209; that span reads EK.

This sequence belongs to the bacterial/plant glucose-1-phosphate adenylyltransferase family. In terms of assembly, homotetramer.

The enzyme catalyses alpha-D-glucose 1-phosphate + ATP + H(+) = ADP-alpha-D-glucose + diphosphate. It participates in glycan biosynthesis; glycogen biosynthesis. Involved in the biosynthesis of ADP-glucose, a building block required for the elongation reactions to produce glycogen. Catalyzes the reaction between ATP and alpha-D-glucose 1-phosphate (G1P) to produce pyrophosphate and ADP-Glc. This Alkalilimnicola ehrlichii (strain ATCC BAA-1101 / DSM 17681 / MLHE-1) protein is Glucose-1-phosphate adenylyltransferase 1.